We begin with the raw amino-acid sequence, 865 residues long: Alanine--tRNA ligase (865 aa).

Residues His556, His560, Cys660, and His664 each coordinate Zn(2+).

The protein belongs to the class-II aminoacyl-tRNA synthetase family. Zn(2+) is required as a cofactor.

The protein resides in the cytoplasm. The enzyme catalyses tRNA(Ala) + L-alanine + ATP = L-alanyl-tRNA(Ala) + AMP + diphosphate. Functionally, catalyzes the attachment of alanine to tRNA(Ala) in a two-step reaction: alanine is first activated by ATP to form Ala-AMP and then transferred to the acceptor end of tRNA(Ala). Also edits incorrectly charged Ser-tRNA(Ala) and Gly-tRNA(Ala) via its editing domain. This is Alanine--tRNA ligase from Ruthia magnifica subsp. Calyptogena magnifica.